The primary structure comprises 160 residues: Endoribonuclease YbeY (160 aa).

Residues H125, H129, and H135 each coordinate Zn(2+).

It belongs to the endoribonuclease YbeY family. Zn(2+) is required as a cofactor.

The protein resides in the cytoplasm. Its function is as follows. Single strand-specific metallo-endoribonuclease involved in late-stage 70S ribosome quality control and in maturation of the 3' terminus of the 16S rRNA. This Dehalococcoides mccartyi (strain ATCC BAA-2100 / JCM 16839 / KCTC 5957 / BAV1) protein is Endoribonuclease YbeY.